The chain runs to 926 residues: Protein Niban 1 (926 aa).

A lipid anchor (N-myristoyl glycine) is attached at glycine 2. Phosphoserine occurs at positions 578, 581, 595, 601, and 640. Disordered stretches follow at residues 604–699 (LPGA…VPGS) and 719–889 (VEND…EQVN). Residues 661–672 (VENTAGPLSSHL) are compositionally biased toward polar residues. Position 699 is a phosphoserine (serine 699). Basic and acidic residues predominate over residues 733–745 (NIKEEESKIHPEA). Residue serine 755 is modified to Phosphoserine. Positions 756–767 (CEEREVREKEAQ) are enriched in basic and acidic residues. Residues 784–797 (GRGSTSQSTSGGLT) show a composition bias toward low complexity. Over residues 840 to 854 (VTVTPQEDATLSSNP) the composition is skewed to polar residues. Position 923 is a phosphoserine (serine 923).

Belongs to the Niban family.

It is found in the cytoplasm. It localises to the membrane. Regulates phosphorylation of a number of proteins involved in translation regulation including EIF2A, EIF4EBP1 and RPS6KB1. May be involved in the endoplasmic reticulum stress response. This Mus musculus (Mouse) protein is Protein Niban 1.